The primary structure comprises 303 residues: Protoheme IX farnesyltransferase (303 aa).

Transmembrane regions (helical) follow at residues 25 to 45, 54 to 74, 104 to 124, 125 to 145, 151 to 171, 179 to 199, 227 to 247, 248 to 268, and 280 to 300; these read MGLVQGNLIPAFAGAWLAVVM, IPQILLMLFGSTLIMGGACAL, LLLLSFGMMLVGEICLFLLNI, PSGVLGLMGIVGYVSYYSIWS, WNTVIGSFPGAVPPLIGWVAI, AIALFLVVFCWQPIHFYALAI, FIWLIILLPVPLLLINLGVVF, VVLATLLNLGWIALGLTTFKK, and FIYSLNYLVIFFVLAVIVSLL.

It belongs to the UbiA prenyltransferase family. Protoheme IX farnesyltransferase subfamily. As to quaternary structure, interacts with CtaA.

It is found in the cell membrane. The catalysed reaction is heme b + (2E,6E)-farnesyl diphosphate + H2O = Fe(II)-heme o + diphosphate. Its pathway is porphyrin-containing compound metabolism; heme O biosynthesis; heme O from protoheme: step 1/1. Converts heme B (protoheme IX) to heme O by substitution of the vinyl group on carbon 2 of heme B porphyrin ring with a hydroxyethyl farnesyl side group. In Staphylococcus aureus (strain Mu3 / ATCC 700698), this protein is Protoheme IX farnesyltransferase.